We begin with the raw amino-acid sequence, 124 residues long: Flowering-promoting factor 1-like protein 1 (124 aa).

Residues 19-42 (PYNQSAGDSSESSSSGGNQQQRMR) form a disordered region. A compositionally biased stretch (low complexity) spans 22 to 39 (QSAGDSSESSSSGGNQQQ).

It belongs to the FPF1 family. In terms of tissue distribution, expressed in roots, flowers, and at a low level, in leaves.

Its function is as follows. Modulates the competence to flowering of apical meristems. The sequence is that of Flowering-promoting factor 1-like protein 1 (FLP1) from Arabidopsis thaliana (Mouse-ear cress).